The chain runs to 425 residues: Tryptophan synthase beta chain (425 aa).

N6-(pyridoxal phosphate)lysine is present on Lys107.

This sequence belongs to the TrpB family. In terms of assembly, tetramer of two alpha and two beta chains. It depends on pyridoxal 5'-phosphate as a cofactor.

It carries out the reaction (1S,2R)-1-C-(indol-3-yl)glycerol 3-phosphate + L-serine = D-glyceraldehyde 3-phosphate + L-tryptophan + H2O. The protein operates within amino-acid biosynthesis; L-tryptophan biosynthesis; L-tryptophan from chorismate: step 5/5. Functionally, the beta subunit is responsible for the synthesis of L-tryptophan from indole and L-serine. This chain is Tryptophan synthase beta chain, found in Synechococcus sp. (strain JA-2-3B'a(2-13)) (Cyanobacteria bacterium Yellowstone B-Prime).